The primary structure comprises 770 residues: Probable methyltransferase PMT25 (770 aa).

The Cytoplasmic portion of the chain corresponds to Met1–Tyr17. Residues Gly18–Met38 traverse the membrane as a helical; Signal-anchor for type II membrane protein segment. At Ser39–Ala770 the chain is on the lumenal side. The segment at Pro44–Tyr238 is disordered. The span at Thr55–Glu79 shows a compositional bias: basic and acidic residues. N-linked (GlcNAc...) asparagine glycans are attached at residues Asn75 and Asn107. Over residues Gln92–Ser109 the composition is skewed to polar residues. 2 stretches are compositionally biased toward basic and acidic residues: residues Ser110 to Asp124 and Asp131 to Glu177. Residues Asn163 and Asn178 are each glycosylated (N-linked (GlcNAc...) asparagine). Composition is skewed to polar residues over residues Glu205 to Ser220 and Gln227 to Tyr238. N-linked (GlcNAc...) asparagine glycans are attached at residues Asn244 and Asn363.

The protein belongs to the methyltransferase superfamily.

The protein resides in the golgi apparatus membrane. This is Probable methyltransferase PMT25 from Arabidopsis thaliana (Mouse-ear cress).